Reading from the N-terminus, the 127-residue chain is MDLIAQLEAEQIAALGKDIPDFKAGDTIRVGYKVTEGTRSRVQNYEGVCISRKNGSGIAGSFTVRKISFGEGVERVFPLYSTNIDSITVVRRGRVRRAKLYYLRARRGKSARIAEVANYKPKADAEA.

The protein belongs to the bacterial ribosomal protein bL19 family.

Its function is as follows. This protein is located at the 30S-50S ribosomal subunit interface and may play a role in the structure and function of the aminoacyl-tRNA binding site. This is Large ribosomal subunit protein bL19 from Ruegeria pomeroyi (strain ATCC 700808 / DSM 15171 / DSS-3) (Silicibacter pomeroyi).